A 230-amino-acid polypeptide reads, in one-letter code: Somatolactin (230 aa).

Positions 1–23 (MMTAVKQSGVWAVLLWPYLLAVS) are cleaved as a signal peptide. 3 disulfides stabilise this stretch: C28–C38, C88–C204, and C221–C229. N34 and N144 each carry an N-linked (GlcNAc...) asparagine glycan.

Belongs to the somatotropin/prolactin family. In terms of tissue distribution, pituitary gland.

It is found in the secreted. The sequence is that of Somatolactin from Solea senegalensis (Senegalese sole).